The chain runs to 1001 residues: O-GlcNAcase NagJ (1001 aa).

Residues 1–30 (MKRKMLKRLLTSAFACMFIANGLITTTVRA) form the signal peptide. Positions 179 to 469 (VSARGIVEGF…WNRAIDMLYG (291 aa)) are catalytic domain. One can recognise a GH84 domain in the interval 180–452 (SARGIVEGFY…TAADYSWNMD (273 aa)). The a protein site is built by glycine 187, lysine 218, and aspartate 297. The active-site Proton donor is aspartate 298. Residues tyrosine 335, 394–396 (WWN), aspartate 401, and asparagine 429 each bind a protein. 2 coiled-coil regions span residues 515–543 (KEDASALIEELYGEFARMEEACNNLKANL) and 573–597 (VAQLNEDTEAYESAKEIAQNKLNTA). A Fibronectin type-III domain is found at 916 to 1001 (PVRDFKASEI…KESLTLRTAR (86 aa)).

This sequence belongs to the glycosyl hydrolase 84 family.

The catalysed reaction is 3-O-(N-acetyl-beta-D-glucosaminyl)-L-seryl-[protein] + H2O = N-acetyl-D-glucosamine + L-seryl-[protein]. It carries out the reaction 3-O-(N-acetyl-beta-D-glucosaminyl)-L-threonyl-[protein] + H2O = L-threonyl-[protein] + N-acetyl-D-glucosamine. With respect to regulation, inhibited by O-(2-acetamido-2-deoxy-D-glucopyranosylidene)amino-N-phenyl-carbamate (PUGNAc) and streptozotocin. Binds carbohydrates. Capable of hydrolyzing the glycosidic link of O-GlcNAcylated proteins. Can bind and deglycosylate O-glycosylated peptides from mammals. This chain is O-GlcNAcase NagJ (nagJ), found in Clostridium perfringens (strain ATCC 13124 / DSM 756 / JCM 1290 / NCIMB 6125 / NCTC 8237 / Type A).